Here is a 590-residue protein sequence, read N- to C-terminus: Probable lysosomal cobalamin transporter (590 aa).

10 consecutive transmembrane segments (helical) span residues 8 to 28 (LIWV…SIFI), 46 to 66 (IFTL…VALV), 94 to 114 (AVAY…VVPF), 145 to 165 (TVAF…VPIG), 190 to 210 (ALTF…VLYT), 314 to 334 (LLSG…MLLT), 348 to 367 (CGYI…VFVH), 376 to 396 (YILF…GIAT), 421 to 441 (ITTV…SMVV), and 508 to 528 (FFGI…LLVF). The interval 567–590 (WEDITGRASRSPQVSGSAGRGTRE) is disordered.

The protein belongs to the LIMR family. LMBRD1 subfamily.

The protein resides in the lysosome membrane. Functionally, probable lysosomal cobalamin transporter. Required to export cobalamin from lysosomes allowing its conversion to cofactors. This is Probable lysosomal cobalamin transporter from Ajellomyces capsulatus (strain NAm1 / WU24) (Darling's disease fungus).